We begin with the raw amino-acid sequence, 647 residues long: DNA mismatch repair protein MutL (647 aa).

A disordered region spans residues 375-433 (KQEEPQAVKQPTQLWQPPKQEWQPPQSLVREEQSWQPSTKPIIEEPIQEEKSWDSNEEG). Residues 387-400 (QLWQPPKQEWQPPQ) show a composition bias toward low complexity.

This sequence belongs to the DNA mismatch repair MutL/HexB family.

Its function is as follows. This protein is involved in the repair of mismatches in DNA. It is required for dam-dependent methyl-directed DNA mismatch repair. May act as a 'molecular matchmaker', a protein that promotes the formation of a stable complex between two or more DNA-binding proteins in an ATP-dependent manner without itself being part of a final effector complex. This Bacillus cereus (strain AH820) protein is DNA mismatch repair protein MutL.